Consider the following 550-residue polypeptide: Chaperonin GroEL (550 aa).

ATP contacts are provided by residues 30-33 (TLGP), lysine 51, 87-91 (DGTTT), glycine 415, and aspartate 495.

The protein belongs to the chaperonin (HSP60) family. As to quaternary structure, forms a cylinder of 14 subunits composed of two heptameric rings stacked back-to-back. Interacts with the co-chaperonin GroES.

It localises to the cytoplasm. It catalyses the reaction ATP + H2O + a folded polypeptide = ADP + phosphate + an unfolded polypeptide.. In terms of biological role, together with its co-chaperonin GroES, plays an essential role in assisting protein folding. The GroEL-GroES system forms a nano-cage that allows encapsulation of the non-native substrate proteins and provides a physical environment optimized to promote and accelerate protein folding. This chain is Chaperonin GroEL, found in Shewanella piezotolerans (strain WP3 / JCM 13877).